Consider the following 466-residue polypeptide: Putative chitinase (466 aa).

A signal peptide spans 1 to 17 (MYLTIWLVSILALGTWG). The GH18 domain occupies 20–380 (FNRFCHYNSW…MAVIHGLNAY (361 aa)). Cys-24 and Cys-49 are oxidised to a cystine. Catalysis depends on Glu-141, which acts as the Proton donor. Residues 408 to 442 (NYRRRNQQEKVAEMEQRIRHLEQELQQSMGNMAYE) are a coiled coil.

This sequence belongs to the glycosyl hydrolase 18 family. Prismatic layer of shell (at protein level). Expressed primarily in the mantle with highest level in the mantle edge and lower level in the mantle pallium.

The protein localises to the secreted. The catalysed reaction is Random endo-hydrolysis of N-acetyl-beta-D-glucosaminide (1-&gt;4)-beta-linkages in chitin and chitodextrins.. The protein is Putative chitinase of Pinctada maxima (Silver-lipped pearl oyster).